The following is a 117-amino-acid chain: Large ribosomal subunit protein uL18 (117 aa).

This sequence belongs to the universal ribosomal protein uL18 family. In terms of assembly, part of the 50S ribosomal subunit; part of the 5S rRNA/L5/L18/L25 subcomplex. Contacts the 5S and 23S rRNAs.

In terms of biological role, this is one of the proteins that bind and probably mediate the attachment of the 5S RNA into the large ribosomal subunit, where it forms part of the central protuberance. The protein is Large ribosomal subunit protein uL18 of Cronobacter sakazakii (strain ATCC BAA-894) (Enterobacter sakazakii).